We begin with the raw amino-acid sequence, 242 residues long: Placenta-expressed transcript 1 protein (242 aa).

An N-terminal signal peptide occupies residues 1-26 (MAVLRSLLPQLGLFLCLALCFSPALS). Residues asparagine 47, asparagine 56, and asparagine 66 are each glycosylated (N-linked (GlcNAc...) asparagine). Serine 223 carries GPI-anchor amidated serine lipidation. A propeptide spans 224–242 (PLAGALHILLVFLISKLLF) (removed in mature form).

In terms of processing, N-glycosylated. GPI-anchored. As to expression, present at high level in the dermal sheath cells near the bulge area of the hair follicle and in the differentiated sebocytes of the normal adult skin (at protein level).

It is found in the apical cell membrane. Its function is as follows. Modulates leading keratinocyte migration and cellular adhesion to matrix proteins during a wound-healing response and promotes wound repair. May play a role during trichilemmal differentiation of the hair follicle. The protein is Placenta-expressed transcript 1 protein (PLET1) of Mesocricetus auratus (Golden hamster).